A 179-amino-acid chain; its full sequence is Large ribosomal subunit protein uL6 (179 aa).

The protein belongs to the universal ribosomal protein uL6 family. As to quaternary structure, part of the 50S ribosomal subunit.

This protein binds to the 23S rRNA, and is important in its secondary structure. It is located near the subunit interface in the base of the L7/L12 stalk, and near the tRNA binding site of the peptidyltransferase center. This Bacillus anthracis protein is Large ribosomal subunit protein uL6.